Here is a 423-residue protein sequence, read N- to C-terminus: Mannose-6-phosphate isomerase (423 aa).

At Ala2 the chain carries N-acetylalanine. A phosphoserine mark is found at Ser102 and Ser108. Residues Gln110, His112, Glu137, and His276 each coordinate Zn(2+). Residue Arg295 is part of the active site.

It belongs to the mannose-6-phosphate isomerase type 1 family. It depends on Zn(2+) as a cofactor. Expressed in all tissues, but more abundant in heart, brain and skeletal muscle.

It is found in the cytoplasm. The enzyme catalyses D-mannose 6-phosphate = D-fructose 6-phosphate. The protein operates within nucleotide-sugar biosynthesis; GDP-alpha-D-mannose biosynthesis; alpha-D-mannose 1-phosphate from D-fructose 6-phosphate: step 1/2. Isomerase that catalyzes the interconversion of fructose-6-P and mannose-6-P and has a critical role in the supply of D-mannose derivatives required for many eukaryotic glycosylation reactions. The polypeptide is Mannose-6-phosphate isomerase (Homo sapiens (Human)).